We begin with the raw amino-acid sequence, 440 residues long: Thymidine phosphorylase (440 aa).

It belongs to the thymidine/pyrimidine-nucleoside phosphorylase family. In terms of assembly, homodimer.

It catalyses the reaction thymidine + phosphate = 2-deoxy-alpha-D-ribose 1-phosphate + thymine. It participates in pyrimidine metabolism; dTMP biosynthesis via salvage pathway; dTMP from thymine: step 1/2. The enzymes which catalyze the reversible phosphorolysis of pyrimidine nucleosides are involved in the degradation of these compounds and in their utilization as carbon and energy sources, or in the rescue of pyrimidine bases for nucleotide synthesis. The sequence is that of Thymidine phosphorylase from Escherichia coli O127:H6 (strain E2348/69 / EPEC).